A 95-amino-acid chain; its full sequence is UPF0381 protein HI_0400 (95 aa).

It belongs to the UPF0381 family.

This Haemophilus influenzae (strain ATCC 51907 / DSM 11121 / KW20 / Rd) protein is UPF0381 protein HI_0400.